A 437-amino-acid chain; its full sequence is Enolase (437 aa).

A (2R)-2-phosphoglycerate-binding site is contributed by Gln162. The Proton donor role is filled by Glu204. Mg(2+)-binding residues include Asp251, Glu297, and Asp324. Positions 349, 378, 379, and 400 each coordinate (2R)-2-phosphoglycerate. The active-site Proton acceptor is Lys349.

This sequence belongs to the enolase family. Mg(2+) is required as a cofactor.

It is found in the cytoplasm. The protein localises to the secreted. It localises to the cell surface. The catalysed reaction is (2R)-2-phosphoglycerate = phosphoenolpyruvate + H2O. Its pathway is carbohydrate degradation; glycolysis; pyruvate from D-glyceraldehyde 3-phosphate: step 4/5. Catalyzes the reversible conversion of 2-phosphoglycerate (2-PG) into phosphoenolpyruvate (PEP). It is essential for the degradation of carbohydrates via glycolysis. This chain is Enolase, found in Chlorobium phaeobacteroides (strain DSM 266 / SMG 266 / 2430).